A 193-amino-acid chain; its full sequence is Alpha-S2-casein (193 aa).

The signal sequence occupies residues 1–15 (MKFFIFTCLLAVVLA). Phosphoserine occurs at positions 23, 24, 25, 28, 47, 68, 123, 125, 128, and 136.

It belongs to the alpha-casein family. Mammary gland specific. Secreted in milk.

Its subcellular location is the secreted. Important role in the capacity of milk to transport calcium phosphate. The chain is Alpha-S2-casein (CSN1S2) from Camelus dromedarius (Dromedary).